The chain runs to 689 residues: MSKHTVLFELGCEELPPKSLKTLRDALQAETVKGLKDAGLAFASIEAYAAPRRLALKIVDVDGAQADTQKRFDGPAVQAAYDAEGKPTKALEGFMRGQGITADQVSTFQAGKVEKVCYLKDVKGQTLDALLPQILQTALDNLPIAKRMRSAASRTEFVRPVKWVVLLKDDQIIEATIQDHQAGNVTYGHRFHAPEAVTLAHANDYLAALEKAYVVANFEKRQATIQEQVKKLADEVNATAIVPADLLDEVTSLVEWPVALRANFEERFLAVPQEALITTMQDNQKYFCLINSEGKLQPYFITVSNIESKDPTQIIEGNEKVVRPRLSDAEFFFLQDQKQPLASRKEKLANMVFQAQLGTLWDKSTRIAKLAVALSPITGANPADAEKAALLAKCDLTSELVGEFPELQGIAGTYYARIEGENTEVSEALGEQYLPKFAGDVLPKTKTGTTIALADRLDTLVGIFGIGQAPTGSKDPFALRRSAIGILRLIIENELDVTIEELVNLALQGYGDIVKDHDKTLADAVAFLEGRYRAKYEDQGVAVDVLQAVQALAPKSPLDFDKRVNAVNHFRALPEAAALAAANKRVANILAKEAAPEGSVVEANLVEDAEKALFAELQAVTPAVEPLLAAKDYTAALSKLAALRAPIDAFFDGVMVMADDADLKANRLRLLAQLRHLFTVVADVSVLQG.

It belongs to the class-II aminoacyl-tRNA synthetase family. As to quaternary structure, tetramer of two alpha and two beta subunits.

Its subcellular location is the cytoplasm. The catalysed reaction is tRNA(Gly) + glycine + ATP = glycyl-tRNA(Gly) + AMP + diphosphate. This chain is Glycine--tRNA ligase beta subunit, found in Acinetobacter baylyi (strain ATCC 33305 / BD413 / ADP1).